Consider the following 252-residue polypeptide: Triosephosphate isomerase (252 aa).

Substrate is bound at residue 10–12 (NWK). His-96 acts as the Electrophile in catalysis. Glu-168 (proton acceptor) is an active-site residue. Residues Gly-174, Ser-214, and 235 to 236 (GG) contribute to the substrate site.

This sequence belongs to the triosephosphate isomerase family. In terms of assembly, homodimer.

The protein resides in the cytoplasm. The catalysed reaction is D-glyceraldehyde 3-phosphate = dihydroxyacetone phosphate. The protein operates within carbohydrate biosynthesis; gluconeogenesis. It functions in the pathway carbohydrate degradation; glycolysis; D-glyceraldehyde 3-phosphate from glycerone phosphate: step 1/1. Involved in the gluconeogenesis. Catalyzes stereospecifically the conversion of dihydroxyacetone phosphate (DHAP) to D-glyceraldehyde-3-phosphate (G3P). The polypeptide is Triosephosphate isomerase (Streptococcus pyogenes serotype M6 (strain ATCC BAA-946 / MGAS10394)).